The primary structure comprises 550 residues: Amino acid transporter AVT1D (550 aa).

Residues 1-16 show a composition bias toward basic and acidic residues; sequence MKLDEEFLHDRDHSFL. Residues 1–99 are disordered; the sequence is MKLDEEFLHD…FMPQSSSRRL (99 aa). Residues 84 to 99 show a composition bias toward polar residues; that stretch reads TPPSVSFMPQSSSRRL. 11 helical membrane-spanning segments follow: residues 164 to 184, 189 to 209, 236 to 256, 264 to 286, 308 to 328, 345 to 365, 375 to 395, 424 to 444, 459 to 479, 481 to 501, and 521 to 541; these read SVLN…PYAI, WLGL…GVLM, FIIS…YIIM, LFPN…IFAI, SVGG…VGAV, LPVT…FPNI, FPLV…AVAV, VWTA…PIVM, GVSI…ALSV, FFAI…ALIF, and LCIF…YSAI.

Belongs to the amino acid/polyamine transporter 2 family. Amino acid/auxin permease (AAAP) (TC 2.A.18.5) subfamily.

The protein localises to the membrane. The chain is Amino acid transporter AVT1D from Arabidopsis thaliana (Mouse-ear cress).